The following is a 190-amino-acid chain: Protein GrpE (190 aa).

The interval 21–49 (DDLQEEVEATETEETVEEVIEETPEKSEL) is disordered. The span at 23 to 42 (LQEEVEATETEETVEEVIEE) shows a compositional bias: acidic residues.

It belongs to the GrpE family. Homodimer.

It is found in the cytoplasm. Participates actively in the response to hyperosmotic and heat shock by preventing the aggregation of stress-denatured proteins, in association with DnaK and GrpE. It is the nucleotide exchange factor for DnaK and may function as a thermosensor. Unfolded proteins bind initially to DnaJ; upon interaction with the DnaJ-bound protein, DnaK hydrolyzes its bound ATP, resulting in the formation of a stable complex. GrpE releases ADP from DnaK; ATP binding to DnaK triggers the release of the substrate protein, thus completing the reaction cycle. Several rounds of ATP-dependent interactions between DnaJ, DnaK and GrpE are required for fully efficient folding. The sequence is that of Protein GrpE from Streptococcus pyogenes serotype M3 (strain SSI-1).